Consider the following 509-residue polypeptide: uncharacterized protein (509 aa).

The next 13 membrane-spanning stretches (helical) occupy residues Ser14–Pro34, Thr117–Ile137, Glu158–Ile178, Ile188–Phe208, Leu209–Ser229, Ile240–Trp260, Leu303–Gly323, Trp324–Ser344, Ala359–Leu379, Met399–Val419, Ser423–Pro443, Met458–Phe478, and Phe484–Val504.

It to E.coli YfcC. The protein to B.subtilis YcgA.

It localises to the cell membrane. This is an uncharacterized protein from Haemophilus influenzae (strain ATCC 51907 / DSM 11121 / KW20 / Rd).